Here is a 232-residue protein sequence, read N- to C-terminus: Ubiquinone biosynthesis O-methyltransferase (232 aa).

S-adenosyl-L-methionine is bound by residues Arg36, Gly55, Asp76, and Met120.

Belongs to the methyltransferase superfamily. UbiG/COQ3 family.

It carries out the reaction a 3-demethylubiquinol + S-adenosyl-L-methionine = a ubiquinol + S-adenosyl-L-homocysteine + H(+). The catalysed reaction is a 3-(all-trans-polyprenyl)benzene-1,2-diol + S-adenosyl-L-methionine = a 2-methoxy-6-(all-trans-polyprenyl)phenol + S-adenosyl-L-homocysteine + H(+). It participates in cofactor biosynthesis; ubiquinone biosynthesis. In terms of biological role, O-methyltransferase that catalyzes the 2 O-methylation steps in the ubiquinone biosynthetic pathway. In Burkholderia mallei (strain ATCC 23344), this protein is Ubiquinone biosynthesis O-methyltransferase.